Reading from the N-terminus, the 62-residue chain is Photosystem II reaction center protein Z (62 aa).

2 helical membrane passes run 8–28 and 41–61; these read AVFALIATSSILLISVPVVFA and FSGTSLWIGLVFLVAILNSLI.

Belongs to the PsbZ family. PSII is composed of 1 copy each of membrane proteins PsbA, PsbB, PsbC, PsbD, PsbE, PsbF, PsbH, PsbI, PsbJ, PsbK, PsbL, PsbM, PsbT, PsbY, PsbZ, Psb30/Ycf12, at least 3 peripheral proteins of the oxygen-evolving complex and a large number of cofactors. It forms dimeric complexes.

It localises to the plastid. The protein localises to the chloroplast thylakoid membrane. May control the interaction of photosystem II (PSII) cores with the light-harvesting antenna, regulates electron flow through the 2 photosystem reaction centers. PSII is a light-driven water plastoquinone oxidoreductase, using light energy to abstract electrons from H(2)O, generating a proton gradient subsequently used for ATP formation. The sequence is that of Photosystem II reaction center protein Z from Calycanthus floridus var. glaucus (Eastern sweetshrub).